A 259-amino-acid chain; its full sequence is Thiazole synthase (259 aa).

K99 (schiff-base intermediate with DXP) is an active-site residue. 1-deoxy-D-xylulose 5-phosphate contacts are provided by residues G160, 186 to 187 (AG), and 208 to 209 (NT).

It belongs to the ThiG family. In terms of assembly, homotetramer. Forms heterodimers with either ThiH or ThiS.

It localises to the cytoplasm. It catalyses the reaction [ThiS sulfur-carrier protein]-C-terminal-Gly-aminoethanethioate + 2-iminoacetate + 1-deoxy-D-xylulose 5-phosphate = [ThiS sulfur-carrier protein]-C-terminal Gly-Gly + 2-[(2R,5Z)-2-carboxy-4-methylthiazol-5(2H)-ylidene]ethyl phosphate + 2 H2O + H(+). It functions in the pathway cofactor biosynthesis; thiamine diphosphate biosynthesis. In terms of biological role, catalyzes the rearrangement of 1-deoxy-D-xylulose 5-phosphate (DXP) to produce the thiazole phosphate moiety of thiamine. Sulfur is provided by the thiocarboxylate moiety of the carrier protein ThiS. In vitro, sulfur can be provided by H(2)S. The chain is Thiazole synthase from Porphyromonas gingivalis (strain ATCC BAA-308 / W83).